Reading from the N-terminus, the 79-residue chain is Dolichyl-diphosphooligosaccharide--protein glycosyltransferase subunit TMEM258 (79 aa).

2 helical membrane-spanning segments follow: residues 17-37 and 55-75; these read VFPH…AWFF and LISL…LLWV.

It belongs to the OST5 family. In terms of assembly, component of the oligosaccharyltransferase (OST) complex.

It is found in the membrane. The protein resides in the endoplasmic reticulum. The protein localises to the cytoplasm. It participates in protein modification; protein glycosylation. Its function is as follows. Subunit of the oligosaccharyl transferase (OST) complex that catalyzes the initial transfer of a defined glycan (Glc(3)Man(9)GlcNAc(2) in eukaryotes) from the lipid carrier dolichol-pyrophosphate to an asparagine residue within an Asn-X-Ser/Thr consensus motif in nascent polypeptide chains, the first step in protein N-glycosylation. N-glycosylation occurs cotranslationally and the complex associates with the Sec61 complex at the channel-forming translocon complex that mediates protein translocation across the endoplasmic reticulum (ER). All subunits are required for a maximal enzyme activity. This is Dolichyl-diphosphooligosaccharide--protein glycosyltransferase subunit TMEM258 from Gallus gallus (Chicken).